The primary structure comprises 97 residues: Large ribosomal subunit protein uL23 (97 aa).

This sequence belongs to the universal ribosomal protein uL23 family. Part of the 50S ribosomal subunit. Contacts protein L29, and trigger factor when it is bound to the ribosome.

Functionally, one of the early assembly proteins it binds 23S rRNA. One of the proteins that surrounds the polypeptide exit tunnel on the outside of the ribosome. Forms the main docking site for trigger factor binding to the ribosome. The sequence is that of Large ribosomal subunit protein uL23 from Methylococcus capsulatus (strain ATCC 33009 / NCIMB 11132 / Bath).